The following is a 259-amino-acid chain: Ribonuclease HII (259 aa).

The RNase H type-2 domain occupies 70–258 (TLIVGIDEVG…VKSLVLGKKE (189 aa)). A divalent metal cation contacts are provided by Asp-76, Glu-77, and Asp-168.

This sequence belongs to the RNase HII family. It depends on Mn(2+) as a cofactor. Requires Mg(2+) as cofactor.

Its subcellular location is the cytoplasm. It catalyses the reaction Endonucleolytic cleavage to 5'-phosphomonoester.. Functionally, endonuclease that specifically degrades the RNA of RNA-DNA hybrids. This is Ribonuclease HII from Streptococcus pneumoniae serotype 2 (strain D39 / NCTC 7466).